A 463-amino-acid chain; its full sequence is Glutamate--tRNA ligase 1 (463 aa).

Positions Pro10 to Gly20 match the 'HIGH' region motif. Residues Lys238–Arg242 carry the 'KMSKS' region motif. Residue Lys241 coordinates ATP.

Belongs to the class-I aminoacyl-tRNA synthetase family. Glutamate--tRNA ligase type 1 subfamily. As to quaternary structure, monomer.

The protein resides in the cytoplasm. It catalyses the reaction tRNA(Glu) + L-glutamate + ATP = L-glutamyl-tRNA(Glu) + AMP + diphosphate. In terms of biological role, catalyzes the attachment of glutamate to tRNA(Glu) in a two-step reaction: glutamate is first activated by ATP to form Glu-AMP and then transferred to the acceptor end of tRNA(Glu). The sequence is that of Glutamate--tRNA ligase 1 from Helicobacter pylori (strain J99 / ATCC 700824) (Campylobacter pylori J99).